The chain runs to 90 residues: Small ribosomal subunit protein bS18 (90 aa).

Residues 1–14 (MARDNGNKDRDGKR) show a composition bias toward basic and acidic residues. The interval 1-23 (MARDNGNKDRDGKRPNGGRNRKM) is disordered.

This sequence belongs to the bacterial ribosomal protein bS18 family. Part of the 30S ribosomal subunit. Forms a tight heterodimer with protein bS6.

Its function is as follows. Binds as a heterodimer with protein bS6 to the central domain of the 16S rRNA, where it helps stabilize the platform of the 30S subunit. This Clostridium acetobutylicum (strain ATCC 824 / DSM 792 / JCM 1419 / IAM 19013 / LMG 5710 / NBRC 13948 / NRRL B-527 / VKM B-1787 / 2291 / W) protein is Small ribosomal subunit protein bS18.